A 185-amino-acid polypeptide reads, in one-letter code: Acireductone dioxygenase (185 aa).

Residues His-101, His-103, Glu-107, and His-145 each coordinate Fe(2+). His-101, His-103, Glu-107, and His-145 together coordinate Ni(2+).

This sequence belongs to the acireductone dioxygenase (ARD) family. Monomer. It depends on Fe(2+) as a cofactor. Ni(2+) is required as a cofactor.

It carries out the reaction 1,2-dihydroxy-5-(methylsulfanyl)pent-1-en-3-one + O2 = 3-(methylsulfanyl)propanoate + CO + formate + 2 H(+). It catalyses the reaction 1,2-dihydroxy-5-(methylsulfanyl)pent-1-en-3-one + O2 = 4-methylsulfanyl-2-oxobutanoate + formate + 2 H(+). Its pathway is amino-acid biosynthesis; L-methionine biosynthesis via salvage pathway; L-methionine from S-methyl-5-thio-alpha-D-ribose 1-phosphate: step 5/6. Its function is as follows. Catalyzes 2 different reactions between oxygen and the acireductone 1,2-dihydroxy-3-keto-5-methylthiopentene (DHK-MTPene) depending upon the metal bound in the active site. Fe-containing acireductone dioxygenase (Fe-ARD) produces formate and 2-keto-4-methylthiobutyrate (KMTB), the alpha-ketoacid precursor of methionine in the methionine recycle pathway. Ni-containing acireductone dioxygenase (Ni-ARD) produces methylthiopropionate, carbon monoxide and formate, and does not lie on the methionine recycle pathway. The chain is Acireductone dioxygenase from Synechococcus sp. (strain RCC307).